The primary structure comprises 155 residues: Small ribosomal subunit protein uS7cz/uS7cy (155 aa).

Belongs to the universal ribosomal protein uS7 family. As to quaternary structure, part of the 30S ribosomal subunit.

Its subcellular location is the plastid. The protein resides in the chloroplast. In terms of biological role, one of the primary rRNA binding proteins, it binds directly to 16S rRNA where it nucleates assembly of the head domain of the 30S subunit. This is Small ribosomal subunit protein uS7cz/uS7cy (rps7-A) from Eucalyptus globulus subsp. globulus (Tasmanian blue gum).